The sequence spans 115 residues: Viral Lymphotactin (115 aa).

An N-terminal signal peptide occupies residues methionine 1–serine 19. Cysteine 30 and cysteine 67 are joined by a disulfide.

The protein belongs to the intercrine gamma family. In terms of assembly, interacts with host XCR1. In terms of processing, N-glycosylated and O-glycosylated.

It localises to the secreted. Chemoattractant for CD4-dendritic cells, but not for CD4+ dendritic cells, T-cells or B-cells. In Rat cytomegalovirus (isolate England) (RCMV-E), this protein is Viral Lymphotactin (vXCL1).